The following is a 131-amino-acid chain: MCEGYVEKPLYLLIAEWMMAENRWVIAREISIHFDIEHSKAVNTLTYILSEVTEISCEVKMIPNKLEGRGCQCQRLVKVVDIDEQIYARLRNNSREKLVGVRKTPRIPAVPLTELNREQKWQMMLSKSMRR.

Its function is as follows. Potential transcriptional activator of carnitine metabolism. This is Transcriptional activatory protein CaiF (caiF) from Escherichia coli (strain K12).